A 544-amino-acid chain; its full sequence is Histone-arginine methyltransferase CARMER (544 aa).

Positions 150–459 (ASQYFQFYGY…QSYDVTIDLH (310 aa)) constitute an SAM-dependent MTase PRMT-type domain. S-adenosyl-L-methionine is bound by residues glutamine 163, arginine 172, glycine 196, glutamate 218, glutamate 247, and threonine 275. The span at 505-520 (DTQQQQQGSRNSNSML) shows a compositional bias: polar residues. The tract at residues 505-527 (DTQQQQQGSRNSNSMLNGGLSVN) is disordered. Arginine 514 is modified (asymmetric dimethylarginine; by autocatalysis).

It belongs to the class I-like SAM-binding methyltransferase superfamily. Protein arginine N-methyltransferase family. Homodimer. Post-translationally, the dimethylated protein is the major form.

Its subcellular location is the cytoplasm. The protein resides in the nucleus. It catalyses the reaction L-arginyl-[protein] + 2 S-adenosyl-L-methionine = N(omega),N(omega)-dimethyl-L-arginyl-[protein] + 2 S-adenosyl-L-homocysteine + 2 H(+). In terms of biological role, methylates (mono- and asymmetric dimethylation) the guanidino nitrogens of arginyl residues in proteins. May methylate histone H3 at 'Arg-17' and activate transcription via chromatin remodeling. This Drosophila grimshawi (Hawaiian fruit fly) protein is Histone-arginine methyltransferase CARMER (Art4).